Consider the following 81-residue polypeptide: Neuronatin (81 aa).

This sequence belongs to the neuronatin family.

May participate in the maintenance of segment identity in the hindbrain and pituitary development, and maturation or maintenance of the overall structure of the nervous system. May function as a regulatory subunit of ion channels. This chain is Neuronatin (NNAT), found in Mesocricetus auratus (Golden hamster).